Here is a 474-residue protein sequence, read N- to C-terminus: Cysteine protease ATG4A (474 aa).

Residues 1–32 (MTSLPGRGVSPSSSDPLCEGNAAPSSSSSSGQ) are disordered. Catalysis depends on C161, which acts as the Nucleophile. Catalysis depends on residues D358 and H360. Over residues 439–449 (KQMYNEESSSG) the composition is skewed to polar residues. The interval 439 to 474 (KQMYNEESSSGDGMDSINVEGLDGSGETGEEEWQIL) is disordered.

The protein belongs to the peptidase C54 family. In terms of assembly, interacts with ATG8.

The protein localises to the cytoplasm. It catalyses the reaction [protein]-C-terminal L-amino acid-glycyl-phosphatidylethanolamide + H2O = [protein]-C-terminal L-amino acid-glycine + a 1,2-diacyl-sn-glycero-3-phosphoethanolamine. Functionally, cysteine protease that plays a key role in autophagy by mediating both proteolytic activation and delipidation of ATG8 family proteins. The protease activity is required for proteolytic activation of ATG8 family proteins: cleaves the C-terminal amino acid of ATG8 proteins to reveal a C-terminal glycine. Exposure of the glycine at the C-terminus is essential for ATG8 proteins conjugation to phosphatidylethanolamine (PE) and insertion to membranes, which is necessary for autophagy. In addition to the protease activity, also mediates delipidation of PE-conjugated ATG8 proteins. The protein is Cysteine protease ATG4A (ATG4A) of Oryza sativa subsp. japonica (Rice).